Reading from the N-terminus, the 249-residue chain is Ribonuclease PH (249 aa).

Phosphate-binding positions include Arg86 and 124-126 (GTR).

It belongs to the RNase PH family. As to quaternary structure, homohexameric ring arranged as a trimer of dimers.

The enzyme catalyses tRNA(n+1) + phosphate = tRNA(n) + a ribonucleoside 5'-diphosphate. In terms of biological role, phosphorolytic 3'-5' exoribonuclease that plays an important role in tRNA 3'-end maturation. Removes nucleotide residues following the 3'-CCA terminus of tRNAs; can also add nucleotides to the ends of RNA molecules by using nucleoside diphosphates as substrates, but this may not be physiologically important. Probably plays a role in initiation of 16S rRNA degradation (leading to ribosome degradation) during starvation. This Clostridium botulinum (strain Eklund 17B / Type B) protein is Ribonuclease PH.